Here is a 295-residue protein sequence, read N- to C-terminus: Sperm acrosome membrane-associated protein 1 (295 aa).

A signal peptide spans 1–29; it reads MSPGGAGCSAGLLLTVGWLLLAGLQSTCG. At 30–220 the chain is on the extracellular side; sequence INVTAVQDPS…SRPDTDAVLV (191 aa). The tract at residues 39-71 is disordered; sequence SLVSEGENEGEEEAENDSEVENEPQAEAEQDVS. Residues 44–68 are compositionally biased toward acidic residues; the sequence is GENEGEEEAENDSEVENEPQAEAEQ. Asparagine 72 carries an N-linked (GlcNAc...) asparagine glycan. Residues 221–241 form a helical membrane-spanning segment; sequence FVLTIGVIICIFVIFVLIFII. Topologically, residues 242 to 295 are cytoplasmic; sequence VNWATVKDFWASKASTTEIQSELSSMKYKDSTSLDQSPTEIPGHEDDALSEWNE. Serine 256 carries the post-translational modification Phosphoserine. Positions 263 to 295 are disordered; that stretch reads ELSSMKYKDSTSLDQSPTEIPGHEDDALSEWNE. Tyrosine 269 carries the post-translational modification Phosphotyrosine. 2 positions are modified to phosphoserine: serine 278 and serine 291.

As to quaternary structure, interacts with CYLC1; the interaction may be relevant for proper acrosome attachment to the nuclear envelope. In terms of processing, N-glycosylated. As to expression, detected in spermatozoa (at protein level).

The protein localises to the cytoplasmic vesicle. It is found in the secretory vesicle. It localises to the acrosome inner membrane. Plays a role in acrosome expansion and establishment of normal sperm morphology during spermatogenesis. Important for male fertility. The chain is Sperm acrosome membrane-associated protein 1 from Sus scrofa (Pig).